A 247-amino-acid polypeptide reads, in one-letter code: Adenosylcobinamide-GDP ribazoletransferase (247 aa).

Transmembrane regions (helical) follow at residues 34-54 (IVTF…VFVA), 59-79 (CGIP…TGGF), 113-133 (GGLA…ELAL), 138-158 (MLAA…LLMY), 171-193 (VFIG…ILAA), and 194-214 (ILMP…AIFI).

The protein belongs to the CobS family. The cofactor is Mg(2+).

The protein resides in the cell inner membrane. The catalysed reaction is alpha-ribazole + adenosylcob(III)inamide-GDP = adenosylcob(III)alamin + GMP + H(+). It carries out the reaction alpha-ribazole 5'-phosphate + adenosylcob(III)inamide-GDP = adenosylcob(III)alamin 5'-phosphate + GMP + H(+). Its pathway is cofactor biosynthesis; adenosylcobalamin biosynthesis; adenosylcobalamin from cob(II)yrinate a,c-diamide: step 7/7. Its function is as follows. Joins adenosylcobinamide-GDP and alpha-ribazole to generate adenosylcobalamin (Ado-cobalamin). Also synthesizes adenosylcobalamin 5'-phosphate from adenosylcobinamide-GDP and alpha-ribazole 5'-phosphate. The polypeptide is Adenosylcobinamide-GDP ribazoletransferase (Citrobacter koseri (strain ATCC BAA-895 / CDC 4225-83 / SGSC4696)).